The chain runs to 215 residues: UPF0502 protein YceH (215 aa).

K80 is subject to N6-acetyllysine.

It belongs to the UPF0502 family.

This is UPF0502 protein YceH from Shigella sonnei (strain Ss046).